Reading from the N-terminus, the 396-residue chain is Transcriptional regulator Myc-B (396 aa).

O-linked (GlcNAc) threonine glycosylation occurs at Thr-56. Residues 79–87 (EMVSEFLGD) carry the 9aaTAD motif. 2 disordered regions span residues 183-251 (KPCK…THQS) and 298-318 (NRKC…RRTH). Residues 191-212 (PASTTLPLDTPPNSGSSSSSSD) show a composition bias toward low complexity. The span at 213-230 (SESDDEDDEDEEEEEEID) shows a compositional bias: acidic residues. Positions 233-244 (TVEKRKSVKKSD) are enriched in basic and acidic residues. The 53-residue stretch at 313-365 (DKRRTHNVLERQRRNELKLSFFALRDVIPDVANNEKAAKVVILKKATECIASM) folds into the bHLH domain. A leucine-zipper region spans residues 372–393 (LISLKEQLRRKCEHLKQRLEQL).

As to quaternary structure, efficient DNA binding requires dimerization with another bHLH protein. Binds DNA as a heterodimer with max.

The protein resides in the nucleus. Functionally, transcription factor that binds DNA in a non-specific manner, yet also specifically recognizes the core sequence 5'-CAC[GA]TG-3'. Activates the transcription of growth-related genes. The protein is Transcriptional regulator Myc-B of Danio rerio (Zebrafish).